The following is a 320-amino-acid chain: ATP-dependent 6-phosphofructokinase (320 aa).

Residue Gly-12 participates in ATP binding. ADP is bound by residues 22–26 and 55–60; these read RGVVR and RYSVSD. ATP-binding positions include 73-74 and 103-106; these read RF and GDGS. Residue Asp-104 coordinates Mg(2+). Residue 126–128 coordinates substrate; that stretch reads TID. The active-site Proton acceptor is the Asp-128. Arg-155 is an ADP binding site. Substrate-binding positions include Arg-163 and 170 to 172; that span reads MGR. Residues 186–188, Lys-212, and 214–216 contribute to the ADP site; these read GCE and KKH. Residues Glu-223, Arg-244, and 250-253 contribute to the substrate site; that span reads HIQR.

Belongs to the phosphofructokinase type A (PFKA) family. ATP-dependent PFK group I subfamily. Prokaryotic clade 'B1' sub-subfamily. Homotetramer. The cofactor is Mg(2+).

The protein resides in the cytoplasm. It catalyses the reaction beta-D-fructose 6-phosphate + ATP = beta-D-fructose 1,6-bisphosphate + ADP + H(+). The protein operates within carbohydrate degradation; glycolysis; D-glyceraldehyde 3-phosphate and glycerone phosphate from D-glucose: step 3/4. With respect to regulation, allosterically activated by ADP and other diphosphonucleosides, and allosterically inhibited by phosphoenolpyruvate. Catalyzes the phosphorylation of D-fructose 6-phosphate to fructose 1,6-bisphosphate by ATP, the first committing step of glycolysis. In Salmonella agona (strain SL483), this protein is ATP-dependent 6-phosphofructokinase.